The following is a 315-amino-acid chain: Ninja-family protein 1 (315 aa).

3 disordered regions span residues 1 to 28, 68 to 142, and 156 to 237; these read MASRDFLGRFGGEKGAASDKAGGGAGEA, SLPG…AQEP, and DQGN…TGDL. The segment covering 99–108 has biased composition (basic and acidic residues); the sequence is ERWRRREMQS. Residues 156 to 166 show a composition bias toward polar residues; it reads DQGNPSSSMPE. Composition is skewed to low complexity over residues 184-197 and 221-234; these read SSDNNNNASNQNKS and LRTLRSLTMRTTST.

It belongs to the Ninja family.

Its subcellular location is the nucleus. The polypeptide is Ninja-family protein 1 (AFP-A1) (Triticum aestivum (Wheat)).